The primary structure comprises 120 residues: Small ribosomal subunit protein uS17 (120 aa).

Residues 1-22 (MMAEAKTGAKATKSAAAGAADG) are compositionally biased toward low complexity. The segment at 1 to 46 (MMAEAKTGAKATKSAAAGAADGASKEKGPKHTPSPPKPSGRRKTRI) is disordered.

Belongs to the universal ribosomal protein uS17 family. In terms of assembly, part of the 30S ribosomal subunit.

One of the primary rRNA binding proteins, it binds specifically to the 5'-end of 16S ribosomal RNA. The sequence is that of Small ribosomal subunit protein uS17 from Mycobacterium ulcerans (strain Agy99).